A 489-amino-acid chain; its full sequence is 2-(3-amino-3-carboxypropyl)histidine synthase subunit 2 (489 aa).

The residue at position 1 (Met1) is an N-acetylmethionine. Position 7 is a phosphoserine (Ser7). Residues Cys89, Cys110, and Cys341 each contribute to the [4Fe-4S] cluster site. A Phosphothreonine modification is found at Thr435. 2 positions are modified to phosphoserine: Ser446 and Ser456. Thr467 carries the phosphothreonine modification.

The protein belongs to the DPH1/DPH2 family. DPH2 subfamily. In terms of assembly, component of the 2-(3-amino-3-carboxypropyl)histidine synthase complex composed of DPH1, DPH2, DPH3 and a NADH-dependent reductase. Interacts with DPH1. It depends on [4Fe-4S] cluster as a cofactor.

It functions in the pathway protein modification; peptidyl-diphthamide biosynthesis. Required for the first step of diphthamide biosynthesis, a post-translational modification of histidine which occurs in elongation factor 2. DPH1 and DPH2 transfer a 3-amino-3-carboxypropyl (ACP) group from S-adenosyl-L-methionine (SAM) to a histidine residue, the reaction is assisted by a reduction system comprising DPH3 and a NADH-dependent reductase. Facilitates the reduction of the catalytic iron-sulfur cluster found in the DPH1 subunit. This chain is 2-(3-amino-3-carboxypropyl)histidine synthase subunit 2 (DPH2), found in Bos taurus (Bovine).